The chain runs to 534 residues: H(+)/hexose cotransporter 1 (534 aa).

At 1–21 (MAGGGVVVVSGRGLSTGDYRG) the chain is on the cytoplasmic side. A helical membrane pass occupies residues 22-42 (GLTVYVVMVAFMAACGGLLLG). Over 43–87 (YDNGVTGGVVSLEAFEKKFFPDVWAKKQEVHEDSPYCTYDNAKLQ) the chain is Extracellular. Residues 88–108 (LFVSSLFLAGLVSCLFASWIT) traverse the membrane as a helical segment. Over 109 to 114 (RNWGRK) the chain is Cytoplasmic. The helical transmembrane segment at 115-135 (VTMGIGGAFFVAGGLVNAFAQ) threads the bilayer. Residues 136-144 (DMAMLIVGR) lie on the Extracellular side of the membrane. Residues 145–165 (VLLGFGVGLGSQVVPQYLSEV) form a helical membrane-spanning segment. At 166-173 (APFSHRGM) the chain is on the cytoplasmic side. Residues 174–194 (LNIGYQLFVTIGILIAGLVNY) traverse the membrane as a helical segment. Residues 195–204 (AVRDWENGWR) lie on the Extracellular side of the membrane. The chain crosses the membrane as a helical span at residues 205-225 (LSLGPAAAPGAILFLGSLVLP). Residues 226 to 299 (ESPNFLVEKG…TSFVIQFFQQ (74 aa)) lie on the Cytoplasmic side of the membrane. A helical membrane pass occupies residues 300–322 (FTGINAIIFYVPVLFSSLGSANS). Residues 323 to 328 (AALLNT) are Extracellular-facing. The chain crosses the membrane as a helical span at residues 329–349 (VVVGAVNVGSTLIAVMFSDKF). The Cytoplasmic segment spans residues 350 to 352 (GRR). The chain crosses the membrane as a helical span at residues 353–373 (FLLIEGGIQCCLAMLTTGVVL). Topologically, residues 374–387 (AIEFAKYGTDPLPK) are extracellular. Residues 388–408 (AVASGILAVICIFISGFAWSW) traverse the membrane as a helical segment. At 409–433 (GPMGWLIPSEIFTLETRPAGTAVAV) the chain is on the cytoplasmic side. Residues 434-454 (VGNFLFSFVIGQAFVSMLCAM) form a helical membrane-spanning segment. Residues 455-456 (EY) lie on the Extracellular side of the membrane. Residues 457 to 477 (GVFLFFAGWLVIMVLCAIFLL) form a helical membrane-spanning segment. The Cytoplasmic segment spans residues 478 to 534 (PETKGVPIERVQALYARHWFWNRVMGPAAAEVIAEDEKRVAAASAIIKEEELSKAMK).

Belongs to the major facilitator superfamily. Sugar transporter (TC 2.A.1.1) family.

The protein resides in the membrane. Active uptake of hexoses. The polypeptide is H(+)/hexose cotransporter 1 (HUP1) (Parachlorella kessleri (Green alga)).